The primary structure comprises 567 residues: Proline--tRNA ligase (567 aa).

The protein belongs to the class-II aminoacyl-tRNA synthetase family. ProS type 1 subfamily. In terms of assembly, homodimer.

It is found in the cytoplasm. The catalysed reaction is tRNA(Pro) + L-proline + ATP = L-prolyl-tRNA(Pro) + AMP + diphosphate. Its function is as follows. Catalyzes the attachment of proline to tRNA(Pro) in a two-step reaction: proline is first activated by ATP to form Pro-AMP and then transferred to the acceptor end of tRNA(Pro). As ProRS can inadvertently accommodate and process non-cognate amino acids such as alanine and cysteine, to avoid such errors it has two additional distinct editing activities against alanine. One activity is designated as 'pretransfer' editing and involves the tRNA(Pro)-independent hydrolysis of activated Ala-AMP. The other activity is designated 'posttransfer' editing and involves deacylation of mischarged Ala-tRNA(Pro). The misacylated Cys-tRNA(Pro) is not edited by ProRS. This chain is Proline--tRNA ligase, found in Geobacillus kaustophilus (strain HTA426).